We begin with the raw amino-acid sequence, 310 residues long: Carbamate kinase 1 (310 aa).

Belongs to the carbamate kinase family.

It localises to the cytoplasm. The catalysed reaction is hydrogencarbonate + NH4(+) + ATP = carbamoyl phosphate + ADP + H2O + H(+). Its pathway is metabolic intermediate metabolism; carbamoyl phosphate degradation; CO(2) and NH(3) from carbamoyl phosphate: step 1/1. This chain is Carbamate kinase 1 (arcC1), found in Staphylococcus aureus (strain bovine RF122 / ET3-1).